We begin with the raw amino-acid sequence, 291 residues long: 2-C-methyl-D-erythritol 4-phosphate cytidylyltransferase (291 aa).

The tract at residues 1–23 is disordered; sequence MTERDFDTPVETPTVQPAPAQGT.

The protein belongs to the IspD/TarI cytidylyltransferase family. IspD subfamily.

The enzyme catalyses 2-C-methyl-D-erythritol 4-phosphate + CTP + H(+) = 4-CDP-2-C-methyl-D-erythritol + diphosphate. It functions in the pathway isoprenoid biosynthesis; isopentenyl diphosphate biosynthesis via DXP pathway; isopentenyl diphosphate from 1-deoxy-D-xylulose 5-phosphate: step 2/6. Functionally, catalyzes the formation of 4-diphosphocytidyl-2-C-methyl-D-erythritol from CTP and 2-C-methyl-D-erythritol 4-phosphate (MEP). This chain is 2-C-methyl-D-erythritol 4-phosphate cytidylyltransferase, found in Bifidobacterium longum subsp. infantis (strain ATCC 15697 / DSM 20088 / JCM 1222 / NCTC 11817 / S12).